Consider the following 617-residue polypeptide: Vacuolar protein sorting-associated protein 33B (617 aa).

Residue Ala2 is modified to N-acetylalanine.

This sequence belongs to the STXBP/unc-18/SEC1 family. Interacts with RAB11A and VIPAS39. Interacts with RAB25. Associates with adapter protein complex 3 (AP-3), clathrin:AP-3 and clathrin:HGS complexes. In terms of assembly, (Microbial infection) Interacts with M.tuberculosis PtpA. Phosphorylated on tyrosine residues. In terms of processing, (Microbial infection) Dephosphorylated by M.tuberculosis PtpA, which induces the reduction of host phagolysosome fusion in M.tuberculosis-infected macrophages. Ubiquitous; highly expressed in testis and low expression in the lung.

The protein resides in the late endosome membrane. It is found in the lysosome membrane. Its subcellular location is the early endosome. The protein localises to the cytoplasmic vesicle. It localises to the clathrin-coated vesicle. The protein resides in the recycling endosome. Functionally, may play a role in vesicle-mediated protein trafficking to lysosomal compartments and in membrane docking/fusion reactions of late endosomes/lysosomes. Required for proper trafficking and targeting of the collagen-modifying enzyme lysyl hydroxylase 3 (LH3) to intracellular collagen. Mediates phagolysosomal fusion in macrophages. Proposed to be involved in endosomal maturation implicating VIPAS39. In epithelial cells, the VPS33B:VIPAS39 complex may play a role in the apical recycling pathway and in the maintenance of the apical-basolateral polarity. Seems to be involved in the sorting of specific cargos from the trans-Golgi network to alpha-granule-destined multivesicular bodies (MVBs) promoting MVBs maturation in megakaryocytes. The protein is Vacuolar protein sorting-associated protein 33B (VPS33B) of Homo sapiens (Human).